The primary structure comprises 276 residues: Undecaprenyl-diphosphatase (276 aa).

5 helical membrane-spanning segments follow: residues 85–105, 108–128, 187–207, 217–237, and 253–273; these read MNVV…EKTI, VLFA…AILW, VATE…TLYE, VDSV…AFAC, and FAWY…SGWI.

This sequence belongs to the UppP family.

It localises to the cell inner membrane. It catalyses the reaction di-trans,octa-cis-undecaprenyl diphosphate + H2O = di-trans,octa-cis-undecaprenyl phosphate + phosphate + H(+). Catalyzes the dephosphorylation of undecaprenyl diphosphate (UPP). Confers resistance to bacitracin. The polypeptide is Undecaprenyl-diphosphatase (Burkholderia mallei (strain NCTC 10247)).